Reading from the N-terminus, the 67-residue chain is Probable Sec-independent protein translocase protein TatE (67 aa).

The helical transmembrane segment at 4–21 threads the bilayer; sequence ISITKLLVIAALVVLLFG. Residues 44–67 are disordered; the sequence is NDDDTGAKTPAASEAPAERLSHKE.

It belongs to the TatA/E family. TatE subfamily.

Its subcellular location is the cell inner membrane. In terms of biological role, part of the twin-arginine translocation (Tat) system that transports large folded proteins containing a characteristic twin-arginine motif in their signal peptide across membranes. TatE shares overlapping functions with TatA. The sequence is that of Probable Sec-independent protein translocase protein TatE from Cronobacter sakazakii (strain ATCC BAA-894) (Enterobacter sakazakii).